A 432-amino-acid polypeptide reads, in one-letter code: Adenosylhomocysteinase (432 aa).

The tract at residues 1 to 24 (MSAYSPLSAQLDADTDVDVESTRT) is disordered. Substrate-binding residues include Asp137 and Glu162. 163 to 165 (TTT) is an NAD(+) binding site. Residues Lys192 and Asp196 each coordinate substrate. NAD(+)-binding positions include Asn197, 226-231 (GYGYCG), Glu249, Asn284, 305-307 (AGH), and Asn352.

This sequence belongs to the adenosylhomocysteinase family. The cofactor is NAD(+).

The protein localises to the cytoplasm. The enzyme catalyses S-adenosyl-L-homocysteine + H2O = L-homocysteine + adenosine. Its pathway is amino-acid biosynthesis; L-homocysteine biosynthesis; L-homocysteine from S-adenosyl-L-homocysteine: step 1/1. In terms of biological role, may play a key role in the regulation of the intracellular concentration of adenosylhomocysteine. This Haloquadratum walsbyi (strain DSM 16854 / JCM 12705 / C23) protein is Adenosylhomocysteinase.